Reading from the N-terminus, the 214-residue chain is Phosphoribosylglycinamide formyltransferase (214 aa).

12 to 14 (GSN) contacts N(1)-(5-phospho-beta-D-ribosyl)glycinamide. Residues 105 to 108 (LLIL) and asparagine 123 each bind (6R)-10-formyltetrahydrofolate. The active-site Proton donor is the histidine 125. Aspartate 167 contributes to the (6R)-10-formyltetrahydrofolate binding site. A N(1)-(5-phospho-beta-D-ribosyl)glycinamide-binding site is contributed by glutamate 197.

Belongs to the GART family.

The enzyme catalyses N(1)-(5-phospho-beta-D-ribosyl)glycinamide + (6R)-10-formyltetrahydrofolate = N(2)-formyl-N(1)-(5-phospho-beta-D-ribosyl)glycinamide + (6S)-5,6,7,8-tetrahydrofolate + H(+). The protein operates within purine metabolism; IMP biosynthesis via de novo pathway; N(2)-formyl-N(1)-(5-phospho-D-ribosyl)glycinamide from N(1)-(5-phospho-D-ribosyl)glycinamide (10-formyl THF route): step 1/1. This Saccharomyces cerevisiae (strain ATCC 204508 / S288c) (Baker's yeast) protein is Phosphoribosylglycinamide formyltransferase.